We begin with the raw amino-acid sequence, 127 residues long: Fumarate reductase subunit C (127 aa).

The next 3 helical transmembrane spans lie at 30–50 (ATVL…GSLV), 58–78 (GWLS…ALLG), and 107–127 (IIVL…LMVV).

Belongs to the FrdC family. As to quaternary structure, part of an enzyme complex containing four subunits: a flavoprotein (FrdA), an iron-sulfur protein (FrdB), and two hydrophobic anchor proteins (FrdC and FrdD).

The protein localises to the cell inner membrane. In terms of biological role, anchors the catalytic components of the fumarate reductase complex to the cell membrane, binds quinones. In Vibrio atlanticus (strain LGP32) (Vibrio splendidus (strain Mel32)), this protein is Fumarate reductase subunit C.